Here is a 512-residue protein sequence, read N- to C-terminus: Probable DNA ligase (512 aa).

Asp-217 is an ATP binding site. The active-site N6-AMP-lysine intermediate is Lys-219. Residues Arg-224, Arg-239, Glu-268, Phe-306, Arg-377, and Lys-383 each contribute to the ATP site.

Belongs to the ATP-dependent DNA ligase family. The cofactor is Mg(2+).

It carries out the reaction ATP + (deoxyribonucleotide)n-3'-hydroxyl + 5'-phospho-(deoxyribonucleotide)m = (deoxyribonucleotide)n+m + AMP + diphosphate.. In terms of biological role, DNA ligase that seals nicks in double-stranded DNA during DNA replication, DNA recombination and DNA repair. The sequence is that of Probable DNA ligase from Beutenbergia cavernae (strain ATCC BAA-8 / DSM 12333 / CCUG 43141 / JCM 11478 / NBRC 16432 / NCIMB 13614 / HKI 0122).